A 468-amino-acid chain; its full sequence is 6-phosphogluconate dehydrogenase, decarboxylating (468 aa).

NADP(+) contacts are provided by residues 10–15, 33–35, 74–76, and N102; these read GMAVMG, NRS, and VKA. Residues N102 and 128–130 contribute to the substrate site; that span reads SGG. K183 acts as the Proton acceptor in catalysis. A substrate-binding site is contributed by 186-187; sequence HN. E190 (proton donor) is an active-site residue. Residues Y191, K260, R287, R445, and H451 each contribute to the substrate site.

The protein belongs to the 6-phosphogluconate dehydrogenase family. In terms of assembly, homodimer.

It catalyses the reaction 6-phospho-D-gluconate + NADP(+) = D-ribulose 5-phosphate + CO2 + NADPH. It participates in carbohydrate degradation; pentose phosphate pathway; D-ribulose 5-phosphate from D-glucose 6-phosphate (oxidative stage): step 3/3. Its function is as follows. Catalyzes the oxidative decarboxylation of 6-phosphogluconate to ribulose 5-phosphate and CO(2), with concomitant reduction of NADP to NADPH. This Salmonella typhimurium (strain LT2 / SGSC1412 / ATCC 700720) protein is 6-phosphogluconate dehydrogenase, decarboxylating (gnd).